The chain runs to 1106 residues: Protein shuttle craft (1106 aa).

Disordered stretches follow at residues 7 to 26 and 189 to 371; these read QLTNGAGEAGPGNESSAMAD and PAAA…KLSQ. The segment covering 189–201 has biased composition (low complexity); the sequence is PAAATTNGNSTAS. 2 stretches are compositionally biased toward basic and acidic residues: residues 232 to 270 and 278 to 323; these read NYERERERERDRDRDRERDRDRDRDRDRDRDRDRDRDSR and RRSD…RDRI. Position 335 is a phosphothreonine (T335). A phosphoserine mark is found at S336, S339, S343, and S354. Over residues 336–354 the composition is skewed to polar residues; that stretch reads SNESAHPSPEKQSQLQQIS. The RING-type; atypical zinc finger occupies 386-433; it reads CLVCVEAIKSHQPTWSCRNCYHMLHLKCTITWASSSKSEVGWRCPACQ. 8 NF-X1-type zinc fingers span residues 474–492, 527–546, 585–604, 644–667, 706–725, 733–752, 844–867, and 876–896; these read CSHACTLLCHPGPCPPCQA, CGEHRCQAECHSGKCAACSE, CGHHKCKDSCHAGSCRPCKL, CGKPAHPHQCGSKCHLGQCPPCPK, CGKHKCNVECCIDIDHDCPL, CGKHKCDQPCHRGNCPPCYR, CGGHKCIKPCHEGPCQSAGEICRQ, and CGHKCAAACHEGACPETPCKE. Positions 1006–1071 constitute an R3H domain; that stretch reads TKSVYETLTD…NRNVVATAHK (66 aa).

Belongs to the NFX1 family. In terms of tissue distribution, ovaries and embryonic central nervous system.

The protein resides in the nucleus. Plays an essential role during the late stages of embryonic neurogenesis. May either fine-tune the guidance or the spatial maintenance of the migrating SNB and in nerve roots, which are composed of axons originating from distinct groups of motor neurons and may be required to either guide or maintain the position of these nerves along a direct and straight path to their ultimate targets in particular muscle fields. May play a role in egg chamber development and/or may confer essential maternal contributions to the early embryo. The polypeptide is Protein shuttle craft (stc) (Drosophila melanogaster (Fruit fly)).